We begin with the raw amino-acid sequence, 45 residues long: Photosystem II reaction center protein K (45 aa).

A propeptide spanning residues methionine 1–alanine 8 is cleaved from the precursor. The helical transmembrane segment at isoleucine 16–alanine 40 threads the bilayer.

The protein belongs to the PsbK family. PSII is composed of 1 copy each of membrane proteins PsbA, PsbB, PsbC, PsbD, PsbE, PsbF, PsbH, PsbI, PsbJ, PsbK, PsbL, PsbM, PsbT, PsbX, PsbY, PsbZ, Psb30/Ycf12, peripheral proteins PsbO, CyanoQ (PsbQ), PsbU, PsbV and a large number of cofactors. It forms dimeric complexes.

Its subcellular location is the cellular thylakoid membrane. One of the components of the core complex of photosystem II (PSII). PSII is a light-driven water:plastoquinone oxidoreductase that uses light energy to abstract electrons from H(2)O, generating O(2) and a proton gradient subsequently used for ATP formation. It consists of a core antenna complex that captures photons, and an electron transfer chain that converts photonic excitation into a charge separation. In Synechocystis sp. (strain ATCC 27184 / PCC 6803 / Kazusa), this protein is Photosystem II reaction center protein K.